Here is an 879-residue protein sequence, read N- to C-terminus: Prostaglandin F2 receptor negative regulator (879 aa).

Positions 1–25 (MGRLASRPLLLALLSLALCRGRVVR) are cleaved as a signal peptide. Ig-like C2-type domains lie at 26–129 (VPTA…ATVQ) and 149–268 (PSAR…KAVE). Topologically, residues 26-832 (VPTATLVRVV…MDVLNAFKYP (807 aa)) are extracellular. Cystine bridges form between Cys-43/Cys-119 and Cys-169/Cys-247. An N-linked (GlcNAc...) asparagine glycan is attached at Asn-44. At Thr-271 the chain carries Phosphothreonine. Ig-like C2-type domains lie at 276-394 (PSVL…EAVS), 406-536 (PDYQ…DVFS), 544-662 (ALED…AWSP), and 688-813 (PIFN…AEIH). N-linked (GlcNAc...) asparagine glycans are attached at residues Asn-286, Asn-300, Asn-383, and Asn-413. Cys-299 and Cys-373 form a disulfide bridge. The Endoplasmic reticulum retention signal signature appears at 424–427 (PTEL). The cysteines at positions 429 and 515 are disulfide-linked. N-linked (GlcNAc...) asparagine glycans are attached at residues Asn-525, Asn-600, Asn-618, and Asn-691. A disulfide bridge connects residues Cys-571 and Cys-655. The Cell attachment site motif lies at 703–705 (RGD). Residues Cys-711 and Cys-793 are joined by a disulfide bond. Residues 833-853 (LLIGVGLSTVIGLLSCLIGYC) traverse the membrane as a helical segment. The Cytoplasmic segment spans residues 854-879 (SSHWCCKKEVQETRRERRRLMSMEMD).

Interacts with CD9 and CD81. Part of a complex composed of CD9, CD81 and IGSF8. Also seems to interact with CD63, CD82 and CD151.

Its subcellular location is the endoplasmic reticulum membrane. It is found in the golgi apparatus. The protein localises to the trans-Golgi network membrane. In terms of biological role, inhibits the binding of prostaglandin F2-alpha (PGF2-alpha) to its specific FP receptor, by decreasing the receptor number rather than the affinity constant. Functional coupling with the prostaglandin F2-alpha receptor seems to occur. In myoblasts, associates with tetraspanins CD9 and CD81 to prevent myotube fusion during muscle regeneration. The polypeptide is Prostaglandin F2 receptor negative regulator (PTGFRN) (Homo sapiens (Human)).